Reading from the N-terminus, the 271-residue chain is Formamidopyrimidine-DNA glycosylase (271 aa).

Proline 2 serves as the catalytic Schiff-base intermediate with DNA. The active-site Proton donor is the glutamate 3. Lysine 58 functions as the Proton donor; for beta-elimination activity in the catalytic mechanism. 3 residues coordinate DNA: histidine 92, arginine 111, and lysine 152. Residues 237 to 271 form an FPG-type zinc finger; the sequence is YVYGKVQKPCKICNNTITLIRQNGRSTYFCNACQN. Catalysis depends on arginine 261, which acts as the Proton donor; for delta-elimination activity.

It belongs to the FPG family. In terms of assembly, monomer. Zn(2+) serves as cofactor.

It catalyses the reaction Hydrolysis of DNA containing ring-opened 7-methylguanine residues, releasing 2,6-diamino-4-hydroxy-5-(N-methyl)formamidopyrimidine.. The catalysed reaction is 2'-deoxyribonucleotide-(2'-deoxyribose 5'-phosphate)-2'-deoxyribonucleotide-DNA = a 3'-end 2'-deoxyribonucleotide-(2,3-dehydro-2,3-deoxyribose 5'-phosphate)-DNA + a 5'-end 5'-phospho-2'-deoxyribonucleoside-DNA + H(+). Functionally, involved in base excision repair of DNA damaged by oxidation or by mutagenic agents. Acts as a DNA glycosylase that recognizes and removes damaged bases. Has a preference for oxidized purines, such as 7,8-dihydro-8-oxoguanine (8-oxoG). Has AP (apurinic/apyrimidinic) lyase activity and introduces nicks in the DNA strand. Cleaves the DNA backbone by beta-delta elimination to generate a single-strand break at the site of the removed base with both 3'- and 5'-phosphates. This is Formamidopyrimidine-DNA glycosylase from Wolbachia sp. subsp. Brugia malayi (strain TRS).